Consider the following 210-residue polypeptide: Probable septum site-determining protein MinC (210 aa).

The protein belongs to the MinC family. As to quaternary structure, interacts with MinD and FtsZ.

Its function is as follows. Cell division inhibitor that blocks the formation of polar Z ring septums. Rapidly oscillates between the poles of the cell to destabilize FtsZ filaments that have formed before they mature into polar Z rings. Prevents FtsZ polymerization. The polypeptide is Probable septum site-determining protein MinC (Thermotoga petrophila (strain ATCC BAA-488 / DSM 13995 / JCM 10881 / RKU-1)).